The sequence spans 448 residues: Tubulin alpha chain, nucleomorph (448 aa).

8 residues coordinate GTP: Gln11, Glu71, Ser140, Gly144, Thr145, Thr179, Asn206, and Asn228. Glu71 contributes to the Mg(2+) binding site. Glu254 is an active-site residue.

Belongs to the tubulin family. Dimer of alpha and beta chains. A typical microtubule is a hollow water-filled tube with an outer diameter of 25 nm and an inner diameter of 15 nM. Alpha-beta heterodimers associate head-to-tail to form protofilaments running lengthwise along the microtubule wall with the beta-tubulin subunit facing the microtubule plus end conferring a structural polarity. Microtubules usually have 13 protofilaments but different protofilament numbers can be found in some organisms and specialized cells. It depends on Mg(2+) as a cofactor.

It catalyses the reaction GTP + H2O = GDP + phosphate + H(+). Tubulin is the major constituent of microtubules, a cylinder consisting of laterally associated linear protofilaments composed of alpha- and beta-tubulin heterodimers. Microtubules grow by the addition of GTP-tubulin dimers to the microtubule end, where a stabilizing cap forms. Below the cap, tubulin dimers are in GDP-bound state, owing to GTPase activity of alpha-tubulin. The polypeptide is Tubulin alpha chain, nucleomorph (tubA) (Guillardia theta (Cryptophyte)).